Reading from the N-terminus, the 359-residue chain is 3-dehydroquinate synthase (359 aa).

NAD(+)-binding positions include 72–77, 106–110, 130–131, Lys-143, Lys-152, and 170–173; these read EGEEHK, GVVGD, TT, and TLTT. 3 residues coordinate Zn(2+): Glu-185, His-248, and His-265.

This sequence belongs to the sugar phosphate cyclases superfamily. Dehydroquinate synthase family. The cofactor is Co(2+). Zn(2+) serves as cofactor. It depends on NAD(+) as a cofactor.

The protein localises to the cytoplasm. It catalyses the reaction 7-phospho-2-dehydro-3-deoxy-D-arabino-heptonate = 3-dehydroquinate + phosphate. It functions in the pathway metabolic intermediate biosynthesis; chorismate biosynthesis; chorismate from D-erythrose 4-phosphate and phosphoenolpyruvate: step 2/7. Catalyzes the conversion of 3-deoxy-D-arabino-heptulosonate 7-phosphate (DAHP) to dehydroquinate (DHQ). This is 3-dehydroquinate synthase from Pelobacter propionicus (strain DSM 2379 / NBRC 103807 / OttBd1).